The primary structure comprises 1102 residues: Carbamoyl phosphate synthase large chain (1102 aa).

The segment at 1–408 is carboxyphosphate synthetic domain; that stretch reads MPKRSDIQSV…ALQKALRSLE (408 aa). Residues arginine 129, arginine 175, glycine 181, glycine 182, glutamate 214, isoleucine 216, glutamate 221, glycine 247, valine 248, histidine 249, glutamine 291, and glutamate 305 each coordinate ATP. One can recognise an ATP-grasp 1 domain in the interval 137–334; sequence EAVKEKIGYG…IAKIAAKLAV (198 aa). Glutamine 291, glutamate 305, and asparagine 307 together coordinate Mg(2+). Residues glutamine 291, glutamate 305, and asparagine 307 each contribute to the Mn(2+) site. Positions 409-551 are oligomerization domain; the sequence is KKGSQFAFTG…YFYSSYDEES (143 aa). The segment at 552–954 is carbamoyl phosphate synthetic domain; sequence EVAPRTKPAV…AYAKSQAGAY (403 aa). Residues 682-873 form the ATP-grasp 2 domain; the sequence is GRVLAEAGLP…LAKAAARISL (192 aa). ATP contacts are provided by arginine 718, arginine 757, leucine 759, glutamate 764, glycine 789, isoleucine 790, histidine 791, serine 792, glutamine 832, and glutamate 844. 3 residues coordinate Mg(2+): glutamine 832, glutamate 844, and asparagine 846. Residues glutamine 832, glutamate 844, and asparagine 846 each coordinate Mn(2+). The region spanning 955 to 1100 is the MGS-like domain; that stretch reads GPLPTAGRAF…QEHAEHLTAA (146 aa). The tract at residues 955–1102 is allosteric domain; the sequence is GPLPTAGRAF…HAEHLTAARD (148 aa).

It belongs to the CarB family. In terms of assembly, composed of two chains; the small (or glutamine) chain promotes the hydrolysis of glutamine to ammonia, which is used by the large (or ammonia) chain to synthesize carbamoyl phosphate. Tetramer of heterodimers (alpha,beta)4. Mg(2+) is required as a cofactor. Mn(2+) serves as cofactor.

It catalyses the reaction hydrogencarbonate + L-glutamine + 2 ATP + H2O = carbamoyl phosphate + L-glutamate + 2 ADP + phosphate + 2 H(+). The catalysed reaction is hydrogencarbonate + NH4(+) + 2 ATP = carbamoyl phosphate + 2 ADP + phosphate + 2 H(+). The protein operates within amino-acid biosynthesis; L-arginine biosynthesis; carbamoyl phosphate from bicarbonate: step 1/1. It functions in the pathway pyrimidine metabolism; UMP biosynthesis via de novo pathway; (S)-dihydroorotate from bicarbonate: step 1/3. Its function is as follows. Large subunit of the glutamine-dependent carbamoyl phosphate synthetase (CPSase). CPSase catalyzes the formation of carbamoyl phosphate from the ammonia moiety of glutamine, carbonate, and phosphate donated by ATP, constituting the first step of 2 biosynthetic pathways, one leading to arginine and/or urea and the other to pyrimidine nucleotides. The large subunit (synthetase) binds the substrates ammonia (free or transferred from glutamine from the small subunit), hydrogencarbonate and ATP and carries out an ATP-coupled ligase reaction, activating hydrogencarbonate by forming carboxy phosphate which reacts with ammonia to form carbamoyl phosphate. This is Carbamoyl phosphate synthase large chain from Streptomyces griseus subsp. griseus (strain JCM 4626 / CBS 651.72 / NBRC 13350 / KCC S-0626 / ISP 5235).